Consider the following 93-residue polypeptide: MARVTVEDCLDHVDNRFELVLVASKRARQLARQGIEPTVEWDNDKPTVVSLREIAEGHVTKDILKQRDQDYQTSSLDLALSANSLNLEGFSFQ.

It belongs to the RNA polymerase subunit omega family. As to quaternary structure, the RNAP catalytic core consists of 2 alpha, 1 beta, 1 beta' and 1 omega subunit. When a sigma factor is associated with the core the holoenzyme is formed, which can initiate transcription.

The enzyme catalyses RNA(n) + a ribonucleoside 5'-triphosphate = RNA(n+1) + diphosphate. In terms of biological role, promotes RNA polymerase assembly. Latches the N- and C-terminal regions of the beta' subunit thereby facilitating its interaction with the beta and alpha subunits. The sequence is that of DNA-directed RNA polymerase subunit omega from Acinetobacter baylyi (strain ATCC 33305 / BD413 / ADP1).